The following is a 268-amino-acid chain: MTLQKKIIELLGVKPLIIPKKEIENRIQILKRYLIENTHLKTLIVGISGGQDSTLTGKLCQLSIQELRKEKKEKSYQFIALRLPYGVQIDEKDCRDAINFINPDQIFTINIKNAVLNSERSLKKQGIQISDYIKGNEKARERMKVQYSFAAITNGLVVGTGNAAENVTGFFTKYGDNGTDVNLISKLNKRQGKFLLKELNCPKHLYLKKPTADLEDEKPQKEDEVALGIKYNIIDDYLEGKKVNSLNKQIIERLYLTTEHKRKIINLG.

An ATP-binding site is contributed by 46–53 (GISGGQDS). Asp52 is a binding site for Mg(2+). Arg140 is a binding site for deamido-NAD(+). Thr160 contributes to the ATP binding site. Residue Glu165 participates in Mg(2+) binding. The deamido-NAD(+) site is built by Lys173 and Asp180. ATP is bound by residues Lys189 and Thr211. 260-261 (HK) provides a ligand contact to deamido-NAD(+).

It belongs to the NAD synthetase family. As to quaternary structure, homodimer.

It catalyses the reaction deamido-NAD(+) + NH4(+) + ATP = AMP + diphosphate + NAD(+) + H(+). Its pathway is cofactor biosynthesis; NAD(+) biosynthesis; NAD(+) from deamido-NAD(+) (ammonia route): step 1/1. Catalyzes the ATP-dependent amidation of deamido-NAD to form NAD. Uses ammonia as a nitrogen source. The protein is NH(3)-dependent NAD(+) synthetase of Buchnera aphidicola subsp. Schizaphis graminum (strain Sg).